The sequence spans 567 residues: Inactive protein kinase SELMODRAFT_444075 (567 aa).

The disordered stretch occupies residues N148–S206. Polar residues predominate over residues E159–A169. Basic and acidic residues predominate over residues L180 to T189. Residues R196–S206 are compositionally biased toward low complexity. Positions F255 to L487 constitute a Protein kinase domain. ATP is bound by residues L261–V269 and K283. Low complexity predominate over residues D511–S538. Residues D511 to D567 are disordered. Basic residues predominate over residues K556 to D567.

This Selaginella moellendorffii (Spikemoss) protein is Inactive protein kinase SELMODRAFT_444075.